We begin with the raw amino-acid sequence, 234 residues long: Peptidase E (234 aa).

Residues Ser123, Asp138, and His160 each act as charge relay system in the active site.

The protein belongs to the peptidase S51 family.

It localises to the cytoplasm. The enzyme catalyses Dipeptidase E catalyzes the hydrolysis of dipeptides Asp-|-Xaa. It does not act on peptides with N-terminal Glu, Asn or Gln, nor does it cleave isoaspartyl peptides.. In terms of biological role, hydrolyzes dipeptides containing N-terminal aspartate residues. May play a role in allowing the cell to use peptide aspartate to spare carbon otherwise required for the synthesis of the aspartate family of amino acids. The protein is Peptidase E of Haemophilus influenzae (strain PittGG).